Here is a 394-residue protein sequence, read N- to C-terminus: 1-deoxy-D-xylulose 5-phosphate reductoisomerase (394 aa).

7 residues coordinate NADPH: Thr-12, Gly-13, Ser-14, Ile-15, Gly-38, Asn-41, and Asn-132. Lys-133 is a 1-deoxy-D-xylulose 5-phosphate binding site. Glu-134 lines the NADPH pocket. Asp-156 contacts Mn(2+). Ser-157, Glu-158, Ser-182, and His-205 together coordinate 1-deoxy-D-xylulose 5-phosphate. Position 158 (Glu-158) interacts with Mn(2+). An NADPH-binding site is contributed by Gly-211. 4 residues coordinate 1-deoxy-D-xylulose 5-phosphate: Ser-218, Asn-223, Lys-224, and Glu-227. Glu-227 serves as a coordination point for Mn(2+).

The protein belongs to the DXR family. It depends on Mg(2+) as a cofactor. The cofactor is Mn(2+).

The catalysed reaction is 2-C-methyl-D-erythritol 4-phosphate + NADP(+) = 1-deoxy-D-xylulose 5-phosphate + NADPH + H(+). The protein operates within isoprenoid biosynthesis; isopentenyl diphosphate biosynthesis via DXP pathway; isopentenyl diphosphate from 1-deoxy-D-xylulose 5-phosphate: step 1/6. Catalyzes the NADPH-dependent rearrangement and reduction of 1-deoxy-D-xylulose-5-phosphate (DXP) to 2-C-methyl-D-erythritol 4-phosphate (MEP). The sequence is that of 1-deoxy-D-xylulose 5-phosphate reductoisomerase from Arthrobacter sp. (strain FB24).